The chain runs to 360 residues: Cannabinoid receptor 2 (360 aa).

Over 1 to 33 (MAGCRELELTNGSNGGLEFNPMKEYMILSDAQQ) the chain is Extracellular. Asn11 carries N-linked (GlcNAc...) asparagine glycosylation. A helical membrane pass occupies residues 34–59 (IAVAVLCTLMGLLSALENVAVLYLIL). The Cytoplasmic segment spans residues 60-71 (SSQRLRRKPSYL). A helical transmembrane segment spans residues 72–92 (FIGSLAGADFLASVIFACNFV). At 93–104 (IFHVFHGVDSRN) the chain is on the extracellular side. A helical transmembrane segment spans residues 105-129 (IFLLKIGSVTMTFTASVGSLLLTAV). Topologically, residues 130 to 149 (DRYLCLCYPPTYKALVTRGR) are cytoplasmic. A helical transmembrane segment spans residues 150-172 (ALVALGVMWVLSALISYLPLMGW). Residues 173–188 (TCCPSPCSELFPLIPN) are Extracellular-facing. The helical transmembrane segment at 189 to 214 (DYLLGWLLFIAILFSGIIYTYGYVLW) threads the bilayer. At 215–246 (KAHQHVASLAEHQDRQVPGIARMRLDVRLAKT) the chain is on the cytoplasmic side. A helical membrane pass occupies residues 247–267 (LGLVMAVLLICWFPALALMGH). At 268–279 (SLVTTLSDKVKE) the chain is on the extracellular side. Residues 280–301 (AFAFCSMLCLVNSMINPIIYAL) traverse the membrane as a helical segment. Residues 302-360 (RSGEIRSAAQHCLTGWKKYLQGLGSEGKEEAPKSSVTETEAEVKTTTGPGSRTPGCSNC) lie on the Cytoplasmic side of the membrane. The interval 327–360 (EGKEEAPKSSVTETEAEVKTTTGPGSRTPGCSNC) is disordered. Phosphoserine occurs at positions 335 and 336. Residue Thr338 is modified to Phosphothreonine. Positions 349 to 360 (GPGSRTPGCSNC) are enriched in polar residues. Ser352 carries the phosphoserine modification.

It belongs to the G-protein coupled receptor 1 family. Post-translationally, constitutively phosphorylated on Ser-352; phosphorylation increases cell internalization and desensitizes the receptor. Expressed in spleen and brain by neurons and glial cells (at protein level). Expressed in lung, testis and thymus but not in heart, liver or kidney. Expressed in cerebellum, cortex and brainstem.

Its subcellular location is the cell membrane. It is found in the cell projection. The protein resides in the dendrite. The protein localises to the perikaryon. Heterotrimeric G protein-coupled receptor for endocannabinoid 2-arachidonoylglycerol mediating inhibition of adenylate cyclase. May function in inflammatory response, nociceptive transmission and bone homeostasis. This Rattus norvegicus (Rat) protein is Cannabinoid receptor 2 (Cnr2).